Reading from the N-terminus, the 317-residue chain is MKNGRGNRVAVVGTGFVGASYAFALMNQGIADEIVLIDANENKAEGDAMDLNHGKVFAPKPADIWHGDYDDCRDADLVVICAGANQKPGETRLDLVDKNIAIFRSIVESVMASGFQGLFLVATNPVDILTYATWKFSSLPQERVIGSGTILDTARFRFLLGDYFAVAPTNVHAYIIGEHGDTELPVWSQADIGGVPIRKLVESKGEEAQKELERIFVNVRDAAYQIIEKKGATYYGIAMGLARVTRAILHHENAILTVSAYLDGPYGERDVYIGVPAVINRNGIREVIEIELDEEEKKWFHRSAATLKGVLARYFAQ.

NAD(+)-binding positions include V17, D38, K43, Y69, and 83 to 84 (GA). The substrate site is built by Q86 and R92. NAD(+) contacts are provided by residues S105, 122-124 (ATN), and S147. Residue 124-127 (NPVD) participates in substrate binding. Position 152–155 (152–155 (DTAR)) interacts with substrate. Residues R157 and H172 each coordinate beta-D-fructose 1,6-bisphosphate. H179 acts as the Proton acceptor in catalysis. Y224 is subject to Phosphotyrosine. Residue T233 coordinates substrate.

Belongs to the LDH/MDH superfamily. LDH family. Homotetramer.

The protein localises to the cytoplasm. The catalysed reaction is (S)-lactate + NAD(+) = pyruvate + NADH + H(+). Its pathway is fermentation; pyruvate fermentation to lactate; (S)-lactate from pyruvate: step 1/1. Allosterically activated by fructose 1,6-bisphosphate (FBP). Catalyzes the conversion of lactate to pyruvate. The chain is L-lactate dehydrogenase from Bacillus caldotenax.